A 347-amino-acid chain; its full sequence is Dihydroorotase (347 aa).

Residues H17 and H19 each contribute to the Zn(2+) site. Substrate-binding positions include 19 to 21 (HLR) and N45. Zn(2+) contacts are provided by K103, H140, and H178. K103 carries the post-translational modification N6-carboxylysine. H140 serves as a coordination point for substrate. L223 contributes to the substrate binding site. Residue D251 participates in Zn(2+) binding. The active site involves D251. Substrate is bound by residues H255 and A267.

Belongs to the metallo-dependent hydrolases superfamily. DHOase family. Class II DHOase subfamily. Homodimer. Zn(2+) is required as a cofactor.

It carries out the reaction (S)-dihydroorotate + H2O = N-carbamoyl-L-aspartate + H(+). Its pathway is pyrimidine metabolism; UMP biosynthesis via de novo pathway; (S)-dihydroorotate from bicarbonate: step 3/3. Its function is as follows. Catalyzes the reversible cyclization of carbamoyl aspartate to dihydroorotate. The polypeptide is Dihydroorotase (Pectobacterium carotovorum subsp. carotovorum (strain PC1)).